A 185-amino-acid polypeptide reads, in one-letter code: Protein P21 (185 aa).

The chain is Protein P21 from Vitis vinifera (Grape).